The sequence spans 509 residues: Subtelomeric hrmA-associated cluster protein AFUB_078990 (509 aa).

Part of the subtelomeric hrmA-associated cluster (HAC) containing genes that alter the hyphal surface (such as reduced total chitin or increased beta-glucan exposure) and perturb inter-hyphal interactions within the developing biofilms, resulting in a loss of vertically aligned polarized growing filaments. Consequently, this hypoxia-typic morphotype (called H-MORPH) with altered biofilm architecture leads to increased hypoxia fitness, increased host inflammation, rapid disease progression, and mortality in a murine model of invasive aspergillosis. The sequence is that of Subtelomeric hrmA-associated cluster protein AFUB_078990 from Aspergillus fumigatus (strain CBS 144.89 / FGSC A1163 / CEA10) (Neosartorya fumigata).